The chain runs to 293 residues: 4-hydroxy-tetrahydrodipicolinate synthase (293 aa).

Pyruvate is bound at residue threonine 45. Tyrosine 133 (proton donor/acceptor) is an active-site residue. Lysine 161 (schiff-base intermediate with substrate) is an active-site residue. Isoleucine 203 contributes to the pyruvate binding site.

The protein belongs to the DapA family. As to quaternary structure, homotetramer; dimer of dimers.

The protein resides in the cytoplasm. The enzyme catalyses L-aspartate 4-semialdehyde + pyruvate = (2S,4S)-4-hydroxy-2,3,4,5-tetrahydrodipicolinate + H2O + H(+). The protein operates within amino-acid biosynthesis; L-lysine biosynthesis via DAP pathway; (S)-tetrahydrodipicolinate from L-aspartate: step 3/4. Catalyzes the condensation of (S)-aspartate-beta-semialdehyde [(S)-ASA] and pyruvate to 4-hydroxy-tetrahydrodipicolinate (HTPA). The sequence is that of 4-hydroxy-tetrahydrodipicolinate synthase from Exiguobacterium sibiricum (strain DSM 17290 / CCUG 55495 / CIP 109462 / JCM 13490 / 255-15).